A 311-amino-acid polypeptide reads, in one-letter code: 4-diphosphocytidyl-2-C-methyl-D-erythritol kinase (311 aa).

Lys-13 is a catalytic residue. 114–124 lines the ATP pocket; sequence PVAGGMAGGSA. Asp-156 is an active-site residue.

This sequence belongs to the GHMP kinase family. IspE subfamily.

It catalyses the reaction 4-CDP-2-C-methyl-D-erythritol + ATP = 4-CDP-2-C-methyl-D-erythritol 2-phosphate + ADP + H(+). It participates in isoprenoid biosynthesis; isopentenyl diphosphate biosynthesis via DXP pathway; isopentenyl diphosphate from 1-deoxy-D-xylulose 5-phosphate: step 3/6. Catalyzes the phosphorylation of the position 2 hydroxy group of 4-diphosphocytidyl-2C-methyl-D-erythritol. The sequence is that of 4-diphosphocytidyl-2-C-methyl-D-erythritol kinase from Corynebacterium diphtheriae (strain ATCC 700971 / NCTC 13129 / Biotype gravis).